The following is a 409-amino-acid chain: Translation initiation factor 2 subunit gamma (409 aa).

Residues 7 to 203 (QPEVNIGLVG…AIEREIPTPE (197 aa)) form the tr-type G domain. Positions 16–23 (GHVDHGKT) are G1. Mg(2+)-binding residues include D19, T23, G44, and S46. Residue 19–24 (DHGKTT) participates in GTP binding. The G2 stretch occupies residues 44–48 (GISIR). The tract at residues 90-93 (DAPG) is G3. GTP-binding positions include 146–149 (NKID) and 181–183 (SAQ). Residues 146–149 (NKID) form a G4 region. The tract at residues 181–183 (SAQ) is G5.

This sequence belongs to the TRAFAC class translation factor GTPase superfamily. Classic translation factor GTPase family. EIF2G subfamily. As to quaternary structure, heterotrimer composed of an alpha, a beta and a gamma chain. Mg(2+) serves as cofactor.

The catalysed reaction is GTP + H2O = GDP + phosphate + H(+). Functionally, eIF-2 functions in the early steps of protein synthesis by forming a ternary complex with GTP and initiator tRNA. The sequence is that of Translation initiation factor 2 subunit gamma from Haloquadratum walsbyi (strain DSM 16790 / HBSQ001).